Consider the following 109-residue polypeptide: Period circadian protein (109 aa).

Polar residues-rich tracts occupy residues 42–56 (QSYS…NLSP) and 68–80 (SSRN…NLNM). The interval 42 to 109 (QSYSTPANTG…LVTLTESLLK (68 aa)) is disordered. Positions 81–97 (GSVTNTSNTGTGTSSGS) are enriched in low complexity.

As to quaternary structure, forms a heterodimer with timeless (TIM); the complex then translocates into the nucleus. In terms of processing, phosphorylated with a circadian rhythmicity, probably by the double-time protein (dbt). Phosphorylation could be implicated in the stability of per monomer and in the formation of heterodimer per-tim.

It is found in the nucleus. The protein resides in the cytoplasm. The protein localises to the perinuclear region. In terms of biological role, essential for biological clock functions. Determines the period length of circadian and ultradian rhythms; an increase in PER dosage leads to shortened circadian rhythms and a decrease leads to lengthened circadian rhythms. Essential for the circadian rhythmicity of locomotor activity, eclosion behavior, and for the rhythmic component of the male courtship song that originates in the thoracic nervous system. The biological cycle depends on the rhythmic formation and nuclear localization of the TIM-PER complex. Light induces the degradation of TIM, which promotes elimination of PER. Nuclear activity of the heterodimer coordinatively regulates PER and TIM transcription through a negative feedback loop. Behaves as a negative element in circadian transcriptional loop. Does not appear to bind DNA, suggesting indirect transcriptional inhibition. This is Period circadian protein (per) from Musca domestica (House fly).